The sequence spans 415 residues: Amino acid decarboxylase lolD2 (415 aa).

Residue lysine 62 is modified to N6-(pyridoxal phosphate)lysine. Pyridoxal 5'-phosphate-binding positions include serine 194, glycine 231, and 266–269 (EPGT). Substrate is bound at residue 315-316 (IV). The Proton donor; shared with dimeric partner role is filled by cysteine 351. Residue cysteine 351 is modified to S-nitrosocysteine. Substrate is bound at residue aspartate 352. Tyrosine 381 is a pyridoxal 5'-phosphate binding site.

Belongs to the Orn/Lys/Arg decarboxylase class-II family. Homodimer. Requires pyridoxal 5'-phosphate as cofactor.

Its pathway is alkaloid biosynthesis. Functionally, amino acid decarboxylase; part of the gene cluster that mediates the biosynthesis of loline alkaloids, potent insecticidal agents composed of a pyrrolizidine ring system and an uncommon ether bridge linking carbons 2 and 7. Lolines are structurally differentiated by the various modifications of the L-amino group and include norloline, loline, N-methylloline, N-acetylloline, N-acetylnorloline, and N-formylloline. The first committed step is the condensation of O-acetyl-L-homoserine (derived from L-aspartic acid) and L-proline, probably catalyzed by the gamma-type pyridoxal 5'-phosphate(PLP)-dependent enzyme lolC, to give the diamino diacid, NACPP. Ensuing cyclization, decarboxylation, and acetylation steps yield 1-exo-acetamidopyrrolizidine (AcAP). LolO is required for installation of the ether bridge upon the pathway intermediate, 1-exo-acetamidopyrrolizidine (AcAP). In sequential 2-oxoglutarate- and O(2)-consuming steps, lolO removes hydrogens from C2 and C7 of AcAP to form both carbon-oxygen bonds in N-acetylnorloline (NANL), the precursor to all other lolines. The enzymes lolD, lolE, lolF and lolT have also been proposed to be involved in the ether-bridge installation. Further processing of the exocyclic moiety of NANL by fungal N-acetamidase (LolN), methyltransferase (LolM), and cytochrome P450 (LolP) enzymes, with occasional involvement of a plant acetyltransferase, generates the other known lolines. LolN transforms NANL to norlonine which is monomethylated and dimethylated to respectively lonine and N-methyllonine (NML) by lolM. LolP catalyzes hydroxylation of the methyl group in N-methylloline (NML) and further oxygenation to N-formylloline (NFL). A plant acetyltransferase is responsible for the acetylation of loline to form N-acetylloline (NAL). LolA might interact with aspartate kinase to prevent feedback inhibition of its activity by these end products and thereby promote production of L-homoserine from L-aspartate. The chain is Amino acid decarboxylase lolD2 from Epichloe uncinata (Endophyte fungus).